Consider the following 393-residue polypeptide: Probable N-acetyl-LL-diaminopimelate aminotransferase (393 aa).

The residue at position 231 (lysine 231) is an N6-(pyridoxal phosphate)lysine.

It belongs to the class-I pyridoxal-phosphate-dependent aminotransferase family. In terms of assembly, homodimer. Pyridoxal 5'-phosphate serves as cofactor.

It localises to the cytoplasm. It catalyses the reaction N-acetyl-(2S,6S)-2,6-diaminopimelate + 2-oxoglutarate = L-2-acetamido-6-oxoheptanedioate + L-glutamate. It participates in amino-acid biosynthesis; L-lysine biosynthesis via DAP pathway; LL-2,6-diaminopimelate from (S)-tetrahydrodipicolinate (acetylase route): step 2/3. Functionally, essential for murein biosynthesis. Probably catalyzes the conversion of L-2-acetamido-6-oxopimelate to N-acetyl-LL-2,6-diaminopimelate. The protein is Probable N-acetyl-LL-diaminopimelate aminotransferase of Bacillus subtilis (strain 168).